The primary structure comprises 125 residues: Multifunctional methyltransferase subunit TRM112-like protein (125 aa).

A TRM112 domain is found at 2-121 (KLFVHNFMSS…RDGIPNMLKV (120 aa)).

The protein belongs to the TRM112 family.

The protein resides in the nucleus. The protein localises to the nucleoplasm. Its subcellular location is the cytoplasm. It localises to the perinuclear region. Acts as an activator of both RNA and protein methyltransferases. In Caenorhabditis elegans, this protein is Multifunctional methyltransferase subunit TRM112-like protein.